The sequence spans 356 residues: MKIAVLPGDGIGTEIVAEAVKVLNALDLKLEMETALVGGAAYEAFGHPLPDATLKLAKEADAVLFGAVGDWKYDKLDRPLRPEQAILGLRKNLGLFANFRPAICYEQLVDASSLKPELIAGLDILIIRELTGDIYFGQPRGRRTATDGHFPGAEEAFDTMRYSRPEIERIAHVAFQAARKRSKRVTSVDKANVLETFQFWRDVLTEVGQQYPDVELDHMYVDNAAMQLVRAPKKFDVVVTGNLFGDILSDEAAMLTGSIGMLPSASLNASSQGLYEPSHGSAPDIAGKGVANPLATILSAAMMLRFSLNQEVAAQRIEAAVKDVLVQGLRTADIFSTGTTRVSTVEMGAAVVKALK.

R90, R100, R128, and D222 together coordinate substrate. Mg(2+) contacts are provided by D222, D246, and D250. NAD(+) is bound at residue G280 to N292.

Belongs to the isocitrate and isopropylmalate dehydrogenases family. LeuB type 1 subfamily. Homodimer. Requires Mg(2+) as cofactor. The cofactor is Mn(2+).

It localises to the cytoplasm. The enzyme catalyses (2R,3S)-3-isopropylmalate + NAD(+) = 4-methyl-2-oxopentanoate + CO2 + NADH. It participates in amino-acid biosynthesis; L-leucine biosynthesis; L-leucine from 3-methyl-2-oxobutanoate: step 3/4. In terms of biological role, catalyzes the oxidation of 3-carboxy-2-hydroxy-4-methylpentanoate (3-isopropylmalate) to 3-carboxy-4-methyl-2-oxopentanoate. The product decarboxylates to 4-methyl-2 oxopentanoate. This chain is 3-isopropylmalate dehydrogenase, found in Albidiferax ferrireducens (strain ATCC BAA-621 / DSM 15236 / T118) (Rhodoferax ferrireducens).